The chain runs to 595 residues: UvrABC system protein C (595 aa).

The GIY-YIG domain maps to 17-94 (FEPGCYLMKD…IKQYQPRYNI (78 aa)). The UVR domain maps to 199 to 234 (KTIIKNLESRMQAASENLEFEQAKEYRDLIQNIHNL).

It belongs to the UvrC family. In terms of assembly, interacts with UvrB in an incision complex.

It localises to the cytoplasm. Its function is as follows. The UvrABC repair system catalyzes the recognition and processing of DNA lesions. UvrC both incises the 5' and 3' sides of the lesion. The N-terminal half is responsible for the 3' incision and the C-terminal half is responsible for the 5' incision. This chain is UvrABC system protein C, found in Staphylococcus carnosus (strain TM300).